We begin with the raw amino-acid sequence, 270 residues long: MSGQQSSPVYKIALGIEYDGSKYYGWQRQNEVRSVQEKLEKALSQVANEPINVFCAGRTDAGVHGTGQVVHFETTALRKDVAWTLGVNANLPGDIAVRWVKAVADDFHARFSATARRYRYIIYNHRLRPAVLAKGVTHYYKPLDAERMHRAAQCLIGENDFTSFRAVQCQSRTPWRNVMHISVTRHGPYVVVDIKANAFVHHMVRNIVGSLLEVGAHNQPESWIAELLAAKDRTLAAATAKAEGLYLVAVDYPDRFDLPKPPMGPLFLAD.

Aspartate 60 functions as the Nucleophile in the catalytic mechanism. Residue tyrosine 118 coordinates substrate.

This sequence belongs to the tRNA pseudouridine synthase TruA family. As to quaternary structure, homodimer.

The enzyme catalyses uridine(38/39/40) in tRNA = pseudouridine(38/39/40) in tRNA. Its function is as follows. Formation of pseudouridine at positions 38, 39 and 40 in the anticodon stem and loop of transfer RNAs. The polypeptide is tRNA pseudouridine synthase A (Salmonella arizonae (strain ATCC BAA-731 / CDC346-86 / RSK2980)).